The primary structure comprises 343 residues: Heat-inducible transcription repressor HrcA (343 aa).

It belongs to the HrcA family.

Functionally, negative regulator of class I heat shock genes (grpE-dnaK-dnaJ and groELS operons). Prevents heat-shock induction of these operons. The protein is Heat-inducible transcription repressor HrcA of Clostridium acetobutylicum (strain ATCC 824 / DSM 792 / JCM 1419 / IAM 19013 / LMG 5710 / NBRC 13948 / NRRL B-527 / VKM B-1787 / 2291 / W).